A 47-amino-acid chain; its full sequence is Delta-actitoxin-Ael1b (47 aa).

Disulfide bonds link Cys-4-Cys-44, Cys-6-Cys-34, and Cys-27-Cys-45.

Belongs to the sea anemone sodium channel inhibitory toxin family. Type I subfamily.

The protein resides in the secreted. The protein localises to the nematocyst. Its function is as follows. Produces a positive inotropic effect in mammalian heart muscle. Modifies current passing through the fast sodium channel (Nav) in neuroblastoma cells, leading to delayed and incomplete inactivation. Paralyzes the shore crab (C.maenas) by tetanic contractions after intramuscular injection. The chain is Delta-actitoxin-Ael1b from Anthopleura elegantissima (Green aggregating anemone).